The sequence spans 273 residues: Ribosomal RNA small subunit methyltransferase A (273 aa).

6 residues coordinate S-adenosyl-L-methionine: N18, L20, G45, E66, D91, and N113.

This sequence belongs to the class I-like SAM-binding methyltransferase superfamily. rRNA adenine N(6)-methyltransferase family. RsmA subfamily.

It localises to the cytoplasm. The catalysed reaction is adenosine(1518)/adenosine(1519) in 16S rRNA + 4 S-adenosyl-L-methionine = N(6)-dimethyladenosine(1518)/N(6)-dimethyladenosine(1519) in 16S rRNA + 4 S-adenosyl-L-homocysteine + 4 H(+). In terms of biological role, specifically dimethylates two adjacent adenosines (A1518 and A1519) in the loop of a conserved hairpin near the 3'-end of 16S rRNA in the 30S particle. May play a critical role in biogenesis of 30S subunits. This chain is Ribosomal RNA small subunit methyltransferase A, found in Escherichia coli (strain 55989 / EAEC).